Reading from the N-terminus, the 988-residue chain is UvrABC system protein A (988 aa).

33 to 40 is an ATP binding site; sequence GLSGSGKS. The segment at 255-282 adopts a C4-type zinc-finger fold; that stretch reads CPVCDYSLPELEPRLFSFNAPVGACPSC. 2 ABC transporter domains span residues 312–589 and 609–938; these read WDRR…PRSL and PNPK…QFLA. Position 642–649 (642–649) interacts with ATP; the sequence is GVSGSGKS. A C4-type zinc finger spans residues 741–767; that stretch reads CEACQGDGMIKVEMHFLPDVYVPCDVC. The interval 948 to 988 is disordered; the sequence is ETRPAAMANKPDARPPRKVKPEKVAKATKTATKKTAKKKAS. A compositionally biased stretch (basic and acidic residues) spans 958 to 972; sequence PDARPPRKVKPEKVA. Positions 978–988 are enriched in basic residues; that stretch reads ATKKTAKKKAS.

This sequence belongs to the ABC transporter superfamily. UvrA family. Forms a heterotetramer with UvrB during the search for lesions.

It localises to the cytoplasm. Its function is as follows. The UvrABC repair system catalyzes the recognition and processing of DNA lesions. UvrA is an ATPase and a DNA-binding protein. A damage recognition complex composed of 2 UvrA and 2 UvrB subunits scans DNA for abnormalities. When the presence of a lesion has been verified by UvrB, the UvrA molecules dissociate. This is UvrABC system protein A from Xanthomonas campestris pv. campestris (strain ATCC 33913 / DSM 3586 / NCPPB 528 / LMG 568 / P 25).